Reading from the N-terminus, the 253-residue chain is Ipsdienol dehydrogenase (253 aa).

NAD(+)-binding positions include 12 to 40 (VTGG…FSRN) and Asp-63. Residue Ser-149 coordinates substrate. The active-site Proton acceptor is the Tyr-162. Lys-166 serves as a coordination point for NAD(+).

Belongs to the short-chain dehydrogenases/reductases (SDR) family. As to expression, specifically expressed in male midguts. Expressed at higher level in the anterior midgut of fed males.

It is found in the cytoplasm. It localises to the cytosol. It carries out the reaction (4R)-ipsdienol + NADP(+) = ipsdienone + NADPH + H(+). It catalyses the reaction (4R)-ipsdienol + NAD(+) = ipsdienone + NADH + H(+). Its function is as follows. Catalyzes the oxidation of racemic ipsdienol and (4R)-(-)-ipsdienol to form ipsdienone (2-methyl-6-methylene-2,7-octadien-4-one), an intermediate in the biosynthesis of pheromonal ipsdienol in male pine engraver beetles. In contrast, (4S)-(+)-ipsdienol is not a substrate. The protein is Ipsdienol dehydrogenase of Ips pini (Pine engraver beetle).